Consider the following 309-residue polypeptide: Small ribosomal subunit protein mS23 (309 aa).

The protein belongs to the mitochondrion-specific ribosomal protein mS23 family. Component of the mitochondrial small ribosomal subunit.

It localises to the mitochondrion. The polypeptide is Small ribosomal subunit protein mS23 (RSM25) (Lodderomyces elongisporus (strain ATCC 11503 / CBS 2605 / JCM 1781 / NBRC 1676 / NRRL YB-4239) (Yeast)).